The chain runs to 453 residues: MFSRLAARLPKASALNGVAARQVRNLSQPAITGSKGRNMPAREPRTTAAATGAEATFTIRDGPVFQGTAFGANTNISGEAVFTTSLVGYPESMTDPSYRGQILVFTQPLIGNYGVPSNERDEFNLLKYFESPHIQCAGIVVSDVATQYSHWTAVQSLGEWCASEGIPAISGVDTRAIVTYLREQGSSLARISIGDEYDADEDEGFIDPGQINLVKRVSTKAPFVVTNPNAKFHVALIDCGVKENILRSLVSRGASVTVFPYNYPIHKVAENFDGVFISNGPGDPTHCQETVYNLAKLMETSPIPIMGICLGHQLLALAVGAKTIKLKYGNRAHNIPALDLTTGQCHITSQNHGYAVDISTLPSDFKEYFVNLNDGSNEGMMHKTRPIFSTQFHPEAKGGPMDSSYLFDKYMENVELFKSNSQVYRDNRPTQFMIDILSKERVGVEPTPLSNAA.

A mitochondrion-targeting transit peptide spans 1-33 (MFSRLAARLPKASALNGVAARQVRNLSQPAITG). A disordered region spans residues 26-50 (LSQPAITGSKGRNMPAREPRTTAAA). Residues Ser97, Gly280, and Gly282 each coordinate L-glutamine. Residues 233 to 420 (HVALIDCGVK…MENVELFKSN (188 aa)) enclose the Glutamine amidotransferase type-1 domain. Catalysis depends on Cys309, which acts as the Nucleophile. 5 residues coordinate L-glutamine: Leu310, Gln313, Asn351, Gly353, and Tyr354. Active-site residues include His393 and Glu395.

It belongs to the CarA family. In terms of assembly, heterodimer composed of 2 chains; the small (or glutamine) chain promotes the hydrolysis of glutamine to ammonia, which is used by the large (or ammonia) chain to synthesize carbamoyl phosphate.

It localises to the mitochondrion matrix. The catalysed reaction is hydrogencarbonate + L-glutamine + 2 ATP + H2O = carbamoyl phosphate + L-glutamate + 2 ADP + phosphate + 2 H(+). It catalyses the reaction L-glutamine + H2O = L-glutamate + NH4(+). The protein operates within amino-acid biosynthesis; L-arginine biosynthesis; carbamoyl phosphate from bicarbonate: step 1/1. Small subunit of the arginine-specific carbamoyl phosphate synthase (CPSase). CPSase catalyzes the formation of carbamoyl phosphate from the ammonia moiety of glutamine, carbonate, and phosphate donated by ATP, the first step of the arginine biosynthetic pathway. The small subunit (glutamine amidotransferase) binds and cleaves glutamine to supply the large subunit with the substrate ammonia. The protein is Carbamoyl phosphate synthase arginine-specific small chain (arg-2) of Neurospora crassa (strain ATCC 24698 / 74-OR23-1A / CBS 708.71 / DSM 1257 / FGSC 987).